A 272-amino-acid polypeptide reads, in one-letter code: Ribosomal RNA small subunit methyltransferase A (272 aa).

Residues asparagine 18, leucine 20, glycine 45, glutamate 66, aspartate 91, and asparagine 113 each contribute to the S-adenosyl-L-methionine site.

Belongs to the class I-like SAM-binding methyltransferase superfamily. rRNA adenine N(6)-methyltransferase family. RsmA subfamily.

The protein resides in the cytoplasm. The catalysed reaction is adenosine(1518)/adenosine(1519) in 16S rRNA + 4 S-adenosyl-L-methionine = N(6)-dimethyladenosine(1518)/N(6)-dimethyladenosine(1519) in 16S rRNA + 4 S-adenosyl-L-homocysteine + 4 H(+). Its function is as follows. Specifically dimethylates two adjacent adenosines (A1518 and A1519) in the loop of a conserved hairpin near the 3'-end of 16S rRNA in the 30S particle. May play a critical role in biogenesis of 30S subunits. In Yersinia pestis bv. Antiqua (strain Antiqua), this protein is Ribosomal RNA small subunit methyltransferase A.